A 214-amino-acid polypeptide reads, in one-letter code: Thymidylate kinase (214 aa).

10–17 (GGEGAGKS) provides a ligand contact to ATP.

The protein belongs to the thymidylate kinase family.

The catalysed reaction is dTMP + ATP = dTDP + ADP. In terms of biological role, phosphorylation of dTMP to form dTDP in both de novo and salvage pathways of dTTP synthesis. The polypeptide is Thymidylate kinase (Brucella canis (strain ATCC 23365 / NCTC 10854 / RM-666)).